We begin with the raw amino-acid sequence, 401 residues long: Enoyl-[acyl-carrier-protein] reductase [NADH] (401 aa).

NAD(+)-binding positions include 48–53, 74–75, 111–112, and 140–141; these read GASSGY, FE, DA, and LA. Tyr-226 provides a ligand contact to substrate. Tyr-236 (proton donor) is an active-site residue. Residues Lys-245 and 274–276 each bind NAD(+); that span reads VVT.

Belongs to the TER reductase family. Monomer.

It catalyses the reaction a 2,3-saturated acyl-[ACP] + NAD(+) = a (2E)-enoyl-[ACP] + NADH + H(+). Its pathway is lipid metabolism; fatty acid biosynthesis. In terms of biological role, involved in the final reduction of the elongation cycle of fatty acid synthesis (FAS II). Catalyzes the reduction of a carbon-carbon double bond in an enoyl moiety that is covalently linked to an acyl carrier protein (ACP). The protein is Enoyl-[acyl-carrier-protein] reductase [NADH] of Xylella fastidiosa (strain 9a5c).